The chain runs to 217 residues: Secreted RxLR effector protein 147 (217 aa).

The signal sequence occupies residues 1–23 (MRGAFYVTTALLITNSIRTAAEA). The disordered stretch occupies residues 22 to 52 (EANPPGRQPMSHHDGVVPGKSSPRRFLQGSH). The short motif at 46–67 (RFLQGSHEPHDKFAVSAANEER) is the RxLR-dEER element.

This sequence belongs to the RxLR effector family.

Its subcellular location is the secreted. The protein localises to the host nucleus. It is found in the host cytoplasm. Its function is as follows. Secreted effector that completely suppresses the host cell death induced by cell death-inducing proteins. In Plasmopara viticola (Downy mildew of grapevine), this protein is Secreted RxLR effector protein 147.